A 471-amino-acid chain; its full sequence is MSENIGKIVQVIGAVVDVSFPNGKLPPILTALEIHNPNSIDAPKLICEVAQHLGDDIVRTIAMDATEGLKRGMDVLDTGHPIMAPVGKASLGRIMNVVGQPIDGLGVIDTKTYLPIHRKPPSFLDQNTSVEPLETGIKVIDLLVPFPKGGKMGLFGGAGVGKTVILMEMINNIARQHGGISVFAGVGERTREGNDLYHEMKEAGVLEKAILVYGQMNEPPGARSRVALTALTCAEYFRDEEHQDVLLFIDNIFRFIQAGSEVSALLGRMPSAVGYQPTLGTDLGSLEERITSTHNGSITSVQAVYVPADDLTDPAPATTFSHLDGTLVLSRQIAELGIYPAVDPLDSTSRILEPNFVGEEHYTVARGVQKILQKYKELQDIIAILGMDELSDEDKLVVSRARRIQRFLSQPFHVAETFTGTAGEYVKLEDTIKGFKGILAGEYDHLSESDFYMVGNIDSAVAKYEKRKESK.

ATP is bound at residue 156 to 163 (GGAGVGKT).

The protein belongs to the ATPase alpha/beta chains family. In terms of assembly, F-type ATPases have 2 components, CF(1) - the catalytic core - and CF(0) - the membrane proton channel. CF(1) has five subunits: alpha(3), beta(3), gamma(1), delta(1), epsilon(1). CF(0) has three main subunits: a(1), b(2) and c(9-12). The alpha and beta chains form an alternating ring which encloses part of the gamma chain. CF(1) is attached to CF(0) by a central stalk formed by the gamma and epsilon chains, while a peripheral stalk is formed by the delta and b chains.

The protein localises to the cell membrane. It carries out the reaction ATP + H2O + 4 H(+)(in) = ADP + phosphate + 5 H(+)(out). In terms of biological role, produces ATP from ADP in the presence of a proton gradient across the membrane. The catalytic sites are hosted primarily by the beta subunits. This Lawsonia intracellularis (strain PHE/MN1-00) protein is ATP synthase subunit beta.